The sequence spans 793 residues: DnaJ homolog subfamily C member 10 (793 aa).

A signal peptide spans 1–32; the sequence is MGVWLSKDDYIRDLKRIILCFLIVYMAILVGT. One can recognise a J domain in the interval 35–100; the sequence is DFYSLLGVSK…DLRKKYDKYG (66 aa). The region spanning 130 to 232 is the Thioredoxin 1 domain; that stretch reads EIITLERREF…ESLVSFAMQH (103 aa). Residues C158 and C161 are joined by a disulfide bond. Trxb regions lie at residues 235-350 and 348-463; these read STVT…LPDF and PDFE…PQNF. Thioredoxin domains lie at 454–553, 557–662, and 671–778; these read HVTT…IEDL, SVVS…SLRI, and VSTG…INEK. C480 and C483 are joined by a disulfide. The N-linked (GlcNAc...) asparagine glycan is linked to N530. Intrachain disulfides connect C588–C591 and C700–C703. A Prevents secretion from ER motif is present at residues 790-793; sequence KDEL.

In terms of assembly, interacts with HSPA5 (via its J domain). Interacts with EDEM1.

It localises to the endoplasmic reticulum lumen. In terms of biological role, endoplasmic reticulum disulfide reductase involved both in the correct folding of proteins and degradation of misfolded proteins. Required for efficient folding of proteins in the endoplasmic reticulum by catalyzing the removal of non-native disulfide bonds formed during the folding of proteins, such as LDLR. Also involved in endoplasmic reticulum-associated degradation (ERAD) by reducing incorrect disulfide bonds in misfolded glycoproteins recognized by EDEM1. Interaction with HSPA5 is required its activity, not for the disulfide reductase activity, but to facilitate the release of DNAJC10 from its substrate. Promotes apoptotic signaling pathway in response to endoplasmic reticulum stress. The protein is DnaJ homolog subfamily C member 10 (DNAJC10) of Pongo abelii (Sumatran orangutan).